The following is a 136-amino-acid chain: Small ribosomal subunit protein uS8c (136 aa).

It belongs to the universal ribosomal protein uS8 family. Part of the 30S ribosomal subunit.

It is found in the plastid. One of the primary rRNA binding proteins, it binds directly to 16S rRNA central domain where it helps coordinate assembly of the platform of the 30S subunit. This Helicosporidium sp. subsp. Simulium jonesii (Green alga) protein is Small ribosomal subunit protein uS8c (rps8).